Reading from the N-terminus, the 702-residue chain is Pentatricopeptide repeat-containing protein At4g16390, chloroplastic (702 aa).

The N-terminal 53 residues, 1 to 53 (MSFHHLCSSPSSLLHDPLPLCNLLSVYPKSTPRSFLSSYNPNSSHFHSRNLLQ), are a transit peptide targeting the chloroplast. PPR repeat units lie at residues 174 to 208 (EVILYNVTMKVFRKSKDLEKSEKLFDEMLERGIKP), 209 to 243 (DNATFTTIISCARQNGVPKRAVEWFEKMSSFGCEP), 244 to 278 (DNVTMAAMIDAYGRAGNVDMALSLYDRARTEKWRI), 279 to 313 (DAVTFSTLIRIYGVSGNYDGCLNIYEEMKALGVKP), 314 to 348 (NLVIYNRLIDSMGRAKRPWQAKIIYKDLITNGFTP), 349 to 383 (NWSTYAALVRAYGRARYGDDALAIYREMKEKGLSL), 384 to 414 (TVILYNTLLSMCADNRYVDEAFEIFQDMKNC), 420 to 454 (DSWTFSSLITVYACSGRVSEAEAALLQMREAGFEP), and 455 to 489 (TLFVLTSVIQCYGKAKQVDDVVRTFDQVLELGITP). The 86-residue stretch at 603-688 (LHLKSLSLGA…WFLTTSVAAK (86 aa)) folds into the Smr domain.

It belongs to the PPR family. P subfamily. As to expression, expressed in leaves and flowers and at lower levels in stems and flower buds.

The protein localises to the plastid. It localises to the chloroplast. In terms of biological role, involved in chloroplast RNA processing. Can bind RNA. Involved in chloroplast development. Involved in chloroplast ribosomal RNA (rRNA) processing and/or translation. Required for FtsH-mediated chloroplast biogenesis. Involved in translation and accumulation of chloroplast ATP synthase subunits. The protein is Pentatricopeptide repeat-containing protein At4g16390, chloroplastic of Arabidopsis thaliana (Mouse-ear cress).